A 316-amino-acid polypeptide reads, in one-letter code: Ribosomal RNA small subunit methyltransferase H (316 aa).

S-adenosyl-L-methionine contacts are provided by residues alanine 35–histidine 37, aspartate 55, phenylalanine 84, aspartate 105, and glutamine 112.

It belongs to the methyltransferase superfamily. RsmH family.

The protein localises to the cytoplasm. The catalysed reaction is cytidine(1402) in 16S rRNA + S-adenosyl-L-methionine = N(4)-methylcytidine(1402) in 16S rRNA + S-adenosyl-L-homocysteine + H(+). Specifically methylates the N4 position of cytidine in position 1402 (C1402) of 16S rRNA. The sequence is that of Ribosomal RNA small subunit methyltransferase H from Streptococcus gordonii (strain Challis / ATCC 35105 / BCRC 15272 / CH1 / DL1 / V288).